The sequence spans 126 residues: Glycine cleavage system H protein (126 aa).

Residues 22–104 (VATIGITEYA…YEKAWMVKVE (83 aa)) form the Lipoyl-binding domain. K63 is modified (N6-lipoyllysine).

Belongs to the GcvH family. As to quaternary structure, the glycine cleavage system is composed of four proteins: P, T, L and H. (R)-lipoate serves as cofactor.

Functionally, the glycine cleavage system catalyzes the degradation of glycine. The H protein shuttles the methylamine group of glycine from the P protein to the T protein. Is also involved in protein lipoylation via its role as an octanoyl/lipoyl carrier protein intermediate. In Staphylococcus aureus (strain JH1), this protein is Glycine cleavage system H protein.